We begin with the raw amino-acid sequence, 1173 residues long: Clustered mitochondria protein homolog (1173 aa).

Low complexity predominate over residues 1–21; that stretch reads MSTIDLPTSSLPGSSGDPSGT. Residues 1-25 form a disordered region; sequence MSTIDLPTSSLPGSSGDPSGTEMSH. Residues 316 to 565 form the Clu domain; sequence VPHRADLSRT…SLFPLDAQFL (250 aa). Residues 888-910 are disordered; sequence KFTGKKGNKKKRNLGKSQNTTNR. Positions 890-901 are enriched in basic residues; it reads TGKKGNKKKRNL. One copy of the TPR repeat lies at 984 to 1017; the sequence is ARAYCQLAMIYHQLEKKEEAVELARKAVIVCERF.

This sequence belongs to the CLU family. May associate with the eukaryotic translation initiation factor 3 (eIF-3) complex.

The protein resides in the cytoplasm. MRNA-binding protein involved in proper cytoplasmic distribution of mitochondria. The chain is Clustered mitochondria protein homolog from Schizosaccharomyces pombe (strain 972 / ATCC 24843) (Fission yeast).